Reading from the N-terminus, the 214-residue chain is Probable transaldolase 1 (214 aa).

Lys-83 functions as the Schiff-base intermediate with substrate in the catalytic mechanism.

This sequence belongs to the transaldolase family. Type 3B subfamily.

It localises to the cytoplasm. The catalysed reaction is D-sedoheptulose 7-phosphate + D-glyceraldehyde 3-phosphate = D-erythrose 4-phosphate + beta-D-fructose 6-phosphate. It participates in carbohydrate degradation; pentose phosphate pathway; D-glyceraldehyde 3-phosphate and beta-D-fructose 6-phosphate from D-ribose 5-phosphate and D-xylulose 5-phosphate (non-oxidative stage): step 2/3. In terms of biological role, transaldolase is important for the balance of metabolites in the pentose-phosphate pathway. The polypeptide is Probable transaldolase 1 (Listeria monocytogenes serotype 4b (strain F2365)).